A 402-amino-acid chain; its full sequence is Protein arginine methyltransferase NDUFAF7 homolog, mitochondrial (402 aa).

The protein belongs to the NDUFAF7 family.

It localises to the mitochondrion. The enzyme catalyses L-arginyl-[protein] + 2 S-adenosyl-L-methionine = N(omega),N(omega)'-dimethyl-L-arginyl-[protein] + 2 S-adenosyl-L-homocysteine + 2 H(+). In terms of biological role, arginine methyltransferase involved in the assembly or stability of mitochondrial NADH:ubiquinone oxidoreductase complex (complex I). This Saccharomyces cerevisiae (strain ATCC 204508 / S288c) (Baker's yeast) protein is Protein arginine methyltransferase NDUFAF7 homolog, mitochondrial.